Consider the following 596-residue polypeptide: Selenocysteine-specific elongation factor (596 aa).

One can recognise a tr-type G domain in the interval 5–217 (RVNVNVGVLG…LLTSQISIPT (213 aa)). Residues 14–21 (GHIDSGKT) are G1. GDP contacts are provided by glycine 19, threonine 21, and alanine 22. Residues glycine 19, threonine 21, and alanine 22 each coordinate GTP. Mg(2+) is bound at residue threonine 21. The G2 stretch occupies residues 46–50 (GITLD). Mg(2+) is bound by residues threonine 48 and aspartate 92. Residues 92–95 (DCPG) form a G3 region. The interval 146-149 (NKID) is G4. Residues aspartate 149 and lysine 187 each coordinate GDP. Residues aspartate 149 and lysine 187 each contribute to the GTP site. Residues 185 to 187 (AAK) are G5. Phosphoserine is present on serine 537. Threonine 545 is subject to Phosphothreonine. A Nuclear localization signal motif is present at residues 547–553 (ALKKRAR). The interval 548–573 (LKKRARAGRGEATRQEESAERSEPSQ) is disordered. Basic and acidic residues predominate over residues 555–571 (GRGEATRQEESAERSEP). Arginine 556 carries the omega-N-methylarginine modification.

This sequence belongs to the TRAFAC class translation factor GTPase superfamily. Classic translation factor GTPase family. SelB subfamily. It depends on Mg(2+) as a cofactor. Requires Mn(2+) as cofactor.

The protein localises to the cytoplasm. It localises to the nucleus. The enzyme catalyses GTP + H2O = GDP + phosphate + H(+). Translation factor required for the incorporation of the rare amino acid selenocysteine encoded by UGA codons. Replaces the eRF1-eRF3-GTP ternary complex for the insertion of selenocysteine directed by the UGA codon. Insertion of selenocysteine at UGA codons is mediated by SECISBP2 and EEFSEC: SECISBP2 (1) specifically binds the SECIS sequence once the 80S ribosome encounters an in-frame UGA codon and (2) contacts the RPS27A/eS31 of the 40S ribosome before ribosome stalling. (3) GTP-bound EEFSEC then delivers selenocysteinyl-tRNA(Sec) to the 80S ribosome and adopts a preaccommodated state conformation. (4) After GTP hydrolysis, EEFSEC dissociates from the assembly, selenocysteinyl-tRNA(Sec) accommodates, and peptide bond synthesis and selenoprotein elongation occur. This chain is Selenocysteine-specific elongation factor, found in Homo sapiens (Human).